The primary structure comprises 250 residues: Phosphoribosylaminoimidazole-succinocarboxamide synthase (250 aa).

This sequence belongs to the SAICAR synthetase family.

It carries out the reaction 5-amino-1-(5-phospho-D-ribosyl)imidazole-4-carboxylate + L-aspartate + ATP = (2S)-2-[5-amino-1-(5-phospho-beta-D-ribosyl)imidazole-4-carboxamido]succinate + ADP + phosphate + 2 H(+). Its pathway is purine metabolism; IMP biosynthesis via de novo pathway; 5-amino-1-(5-phospho-D-ribosyl)imidazole-4-carboxamide from 5-amino-1-(5-phospho-D-ribosyl)imidazole-4-carboxylate: step 1/2. This Synechococcus sp. (strain WH7803) protein is Phosphoribosylaminoimidazole-succinocarboxamide synthase.